Reading from the N-terminus, the 245-residue chain is MVMDDLFQRMVSCVLPSWRAFIDEEVKKPYFQALLEKLKALKATIIPKPELIFRVFSFFKPIDTKVIIFGQDPYPSPNDACGLAFASNNSKTPASLKRIILRLEKEYPSLKQESSWQQNFLLNWAEQGVLLLNGILTTTVFIRNAHKNWGWEEFNCNLLTFLKNQNIKPLLVFLGVQTKNFVVKSIGNVDGFEHLSYPHPSPLSGNLFLTNPNDLFKTINNWLKQHNQKIINWAVVKNASFDQLS.

The Proton acceptor role is filled by D72.

It belongs to the uracil-DNA glycosylase (UDG) superfamily. UNG family.

Its subcellular location is the cytoplasm. It carries out the reaction Hydrolyzes single-stranded DNA or mismatched double-stranded DNA and polynucleotides, releasing free uracil.. In terms of biological role, excises uracil residues from the DNA which can arise as a result of misincorporation of dUMP residues by DNA polymerase or due to deamination of cytosine. The sequence is that of Uracil-DNA glycosylase (ung) from Mycoplasma genitalium (strain ATCC 33530 / DSM 19775 / NCTC 10195 / G37) (Mycoplasmoides genitalium).